The sequence spans 122 residues: Small ribosomal subunit protein uS13 (122 aa).

Residues 95–116 show a composition bias toward basic residues; it reads GLPCRGQKTKTNARTRKGKKKT. Residues 95 to 122 are disordered; it reads GLPCRGQKTKTNARTRKGKKKTVGAATK.

Belongs to the universal ribosomal protein uS13 family. As to quaternary structure, part of the 30S ribosomal subunit. Forms a loose heterodimer with protein S19. Forms two bridges to the 50S subunit in the 70S ribosome.

Located at the top of the head of the 30S subunit, it contacts several helices of the 16S rRNA. In the 70S ribosome it contacts the 23S rRNA (bridge B1a) and protein L5 of the 50S subunit (bridge B1b), connecting the 2 subunits; these bridges are implicated in subunit movement. Contacts the tRNAs in the A and P-sites. The protein is Small ribosomal subunit protein uS13 of Aliarcobacter butzleri (strain RM4018) (Arcobacter butzleri).